Here is a 306-residue protein sequence, read N- to C-terminus: tRNA pseudouridine synthase B (306 aa).

D43 serves as the catalytic Nucleophile.

It belongs to the pseudouridine synthase TruB family. Type 1 subfamily.

The catalysed reaction is uridine(55) in tRNA = pseudouridine(55) in tRNA. Responsible for synthesis of pseudouridine from uracil-55 in the psi GC loop of transfer RNAs. This is tRNA pseudouridine synthase B from Anaplasma marginale (strain St. Maries).